Reading from the N-terminus, the 282-residue chain is Pantothenate synthetase (282 aa).

Position 26 to 33 (26 to 33 (MGNLHEGH)) interacts with ATP. Histidine 33 serves as the catalytic Proton donor. Glutamine 57 is a binding site for (R)-pantoate. Glutamine 57 contacts beta-alanine. 148-151 (GKKD) serves as a coordination point for ATP. A (R)-pantoate-binding site is contributed by glutamine 154. An ATP-binding site is contributed by 185–188 (LSSR).

This sequence belongs to the pantothenate synthetase family. As to quaternary structure, homodimer.

It is found in the cytoplasm. The catalysed reaction is (R)-pantoate + beta-alanine + ATP = (R)-pantothenate + AMP + diphosphate + H(+). Its pathway is cofactor biosynthesis; (R)-pantothenate biosynthesis; (R)-pantothenate from (R)-pantoate and beta-alanine: step 1/1. In terms of biological role, catalyzes the condensation of pantoate with beta-alanine in an ATP-dependent reaction via a pantoyl-adenylate intermediate. This chain is Pantothenate synthetase, found in Paracidovorax citrulli (strain AAC00-1) (Acidovorax citrulli).